The following is an 874-amino-acid chain: Alanine--tRNA ligase (874 aa).

Zn(2+)-binding residues include His564, His568, Cys665, and His669.

It belongs to the class-II aminoacyl-tRNA synthetase family. Zn(2+) is required as a cofactor.

It is found in the cytoplasm. It carries out the reaction tRNA(Ala) + L-alanine + ATP = L-alanyl-tRNA(Ala) + AMP + diphosphate. Catalyzes the attachment of alanine to tRNA(Ala) in a two-step reaction: alanine is first activated by ATP to form Ala-AMP and then transferred to the acceptor end of tRNA(Ala). Also edits incorrectly charged Ser-tRNA(Ala) and Gly-tRNA(Ala) via its editing domain. The polypeptide is Alanine--tRNA ligase (Burkholderia multivorans (strain ATCC 17616 / 249)).